The primary structure comprises 3262 residues: Striated muscle-specific serine/threonine-protein kinase (3262 aa).

A disordered region spans residues 1-33 (MQKARGTRGEDAGTRAPPSPGVPPKRAKVGAGR). Position 33 is an omega-N-methylarginine (R33). The Ig-like 1 domain maps to 45-126 (PVFLRPLKNA…GQASCEAVLT (82 aa)). S141 is subject to Phosphoserine. Disordered stretches follow at residues 155–185 (RAFSTPTGGSDTLVGTSLDTPPTSVTGTSEE), 198–226 (EQEAGSGGGTRPLPGSPRQAQTTGAGPRH), 280–720 (GLHR…VSAG), and 814–875 (LAVR…APPT). The segment covering 158–185 (STPTGGSDTLVGTSLDTPPTSVTGTSEE) has biased composition (polar residues). The span at 301–317 (PALPPPSKSALLPPPSP) shows a compositional bias: pro residues. 2 positions are modified to phosphoserine: S368 and S375. Position 379 is a phosphothreonine (T379). S382 and S385 each carry phosphoserine. The span at 404 to 422 (ILDKLQFFEERRRSLERSD) shows a compositional bias: basic and acidic residues. S423 is modified (phosphoserine). T453 carries the phosphothreonine modification. 5 positions are modified to phosphoserine: S457, S463, S493, S511, and S531. Residues 459 to 473 (EELRSPRGSVAERRR) show a composition bias toward basic and acidic residues. Positions 510-522 (TSREELVRSHESL) are enriched in basic and acidic residues. Residues 543–552 (RPSTPKTSRA) show a composition bias toward polar residues. Phosphoserine is present on S554. Basic and acidic residues-rich tracts occupy residues 624–638 (PESRTKAPSGRKREP) and 663–680 (EKNRAGPEAEKRLRRGPE). Positions 727 to 815 (PVFEIPLQNM…GQATCASSLA (89 aa)) constitute an Ig-like 2 domain. The span at 820–830 (GSTSPFSSPIT) shows a compositional bias: polar residues. Ig-like domains follow at residues 874–963 (PTFK…ARLE), 968–1062 (PESR…ARLT), and 1069–1157 (PLFT…AQLY). C994 and C1046 form a disulfide bridge. Residues S1133 and S1177 each carry the phosphoserine modification. The tract at residues 1162 to 1185 (RTAASGPSSKLEKMPSIPEEPEHG) is disordered. The region spanning 1193-1283 (PDFLRPLQDL…AACYAHLYVT (91 aa)) is the Ig-like 6 domain. The 98-residue stretch at 1290–1387 (PDGAPEVVAV…PSEPVQLLEH (98 aa)) folds into the Fibronectin type-III 1 domain. 2 consecutive Ig-like domains span residues 1389–1485 (PPLE…VTLE) and 1490–1578 (PRFE…AELS). C1413 and C1469 are joined by a disulfide. A Protein kinase 1 domain is found at 1606–1859 (YDIHQEIGRG…AEETLEHPWF (254 aa)). ATP contacts are provided by residues 1612 to 1620 (IGRGAFSYL) and K1635. D1724 serves as the catalytic Proton acceptor. Residues 1913–2571 (MPRRQPPSGG…SQPNLSSSVQ (659 aa)) are disordered. Residues 1918-1927 (PPSGGLSSSS) are compositionally biased toward low complexity. The segment covering 1980–1990 (EQERTPSKDQE) has biased composition (basic and acidic residues). Phosphoserine occurs at positions 1993, 2004, 2019, 2020, and 2042. A compositionally biased stretch (basic and acidic residues) spans 2009 to 2019 (SPRRPELRRGS). R2060 bears the Asymmetric dimethylarginine; alternate mark. R2060 bears the Omega-N-methylarginine; alternate mark. A compositionally biased stretch (low complexity) spans 2069-2081 (AQRLQALRQRLLR). Phosphoserine is present on residues S2114 and S2135. At R2144 the chain carries Omega-N-methylarginine. Polar residues predominate over residues 2168–2179 (ESPSLSALSETQ). Phosphoserine occurs at positions 2182 and 2207. The segment covering 2193–2207 (ITKSPEPSAVTSRDS) has biased composition (polar residues). Positions 2208–2218 (PQPPEPQPVPE) are enriched in pro residues. The span at 2219–2229 (KVPEPKPEPVR) shows a compositional bias: basic and acidic residues. Low complexity predominate over residues 2230-2268 (AAKPAQPPLALQMPTQPLTPYAQIMQSLQLSSPTLSPQD). Residues 2337 to 2348 (FEAKFKRSRESP) are compositionally biased toward basic and acidic residues. The segment covering 2349–2358 (LSRGLRLLSR) has biased composition (low complexity). Residues 2359–2375 (SRSEERGPFRGAEDDGI) show a composition bias toward basic and acidic residues. S2379 carries the post-translational modification Phosphoserine. T2383 carries the post-translational modification Phosphothreonine. A compositionally biased stretch (basic and acidic residues) spans 2387 to 2398 (LVRRPERSRSVQ). Phosphoserine is present on residues S2413, S2417, S2441, S2442, S2447, and S2451. Positions 2461 to 2487 (SSTLERLSSRLQRSGSSEDSGGASGRS) are enriched in low complexity. The segment covering 2513–2523 (QLGSQTGATTP) has biased composition (polar residues). A phosphoserine mark is found at S2524 and S2527. Low complexity predominate over residues 2524 to 2543 (SAESLGSEASGTSGSSAPGE). The segment covering 2546–2557 (SRHRWGLSRLRK) has biased composition (basic residues). At S2562 the chain carries Phosphoserine. Residues 2562 to 2571 (SQPNLSSSVQ) show a composition bias toward polar residues. Positions 2586 to 2676 (PPVFHIKLKD…GSITSSCTVA (91 aa)) constitute an Ig-like 9 domain. An intrachain disulfide couples C2608 to C2660. The Fibronectin type-III 2 domain occupies 2683-2777 (KLAPPEVPQT…KVFIRGTPDS (95 aa)). 3 disordered regions span residues 2756-2832 (RAGQ…MSAN), 2857-2899 (ATQQ…PAPS), and 2912-2960 (APPA…PQKP). T2774 carries the phosphothreonine modification. 2 stretches are compositionally biased toward low complexity: residues 2775-2789 (PDSPAQPAAAPRDAP) and 2803-2831 (PTSLAPTPALAPPASQASTLSPSTSSMSA). S2777 bears the Phosphoserine mark. Residues 2865–2968 (PPSIVVTPSE…KPYTFLEEKA (104 aa)) form the Fibronectin type-III 3 domain. Over residues 2883–2899 (GTLTPTSSPQGVKPAPS) the composition is skewed to polar residues. Pro residues predominate over residues 2913 to 2927 (PPAPQAPAPEPPPEP). A compositionally biased stretch (polar residues) spans 2943–2953 (SSPTPESTTLR). S2944 carries the post-translational modification Phosphoserine. The region spanning 2946 to 3213 (TPESTTLRQG…LQDCLAHPWL (268 aa)) is the Protein kinase 2 domain. Catalysis depends on D3080, which acts as the Proton acceptor.

The protein belongs to the protein kinase superfamily. CAMK Ser/Thr protein kinase family. Interacts with MTM1. Isoform 3 is found as a monomer or homodimer. Post-translationally, may be autophosphorylated. As to expression, isoform 1 is preferentially expressed in striated muscle. Non-kinase form such as isoform 3 is predominantly expressed in the aorta. Isoform 3 appears to be expressed only in highly differentiated ASMC in normal vessel walls and down-regulated in dedifferentiated ASMC in vivo. In response to vascular injuries ASMC dedifferentiate and change from a quiescent and contractile phenotype to a proliferative and synthetic phenotype. This proliferation of vascular smooth muscle cells is one of the most prominent features of atherosclerosis. Isoform 1 and isoform 4 are expressed in cardiomyocytes of the developing heart.

It is found in the nucleus. It catalyses the reaction L-seryl-[protein] + ATP = O-phospho-L-seryl-[protein] + ADP + H(+). The enzyme catalyses L-threonyl-[protein] + ATP = O-phospho-L-threonyl-[protein] + ADP + H(+). In terms of biological role, isoform 3 may have a role in regulating the growth and differentiation of arterial smooth muscle cells. The protein is Striated muscle-specific serine/threonine-protein kinase (Speg) of Mus musculus (Mouse).